The sequence spans 117 residues: MAIKKTYRVKRSKDFDQIFSAKHSFANKKFVVYKLNTNQPHFRVGLSVSKKLGHAVLRNRIKRLLRHAIAEFKPYLTDEDFVIIARSGVETLSFEEVKKNLKHVLKLSKIYVDGEND.

The protein belongs to the RnpA family. As to quaternary structure, consists of a catalytic RNA component (M1 or rnpB) and a protein subunit.

It catalyses the reaction Endonucleolytic cleavage of RNA, removing 5'-extranucleotides from tRNA precursor.. In terms of biological role, RNaseP catalyzes the removal of the 5'-leader sequence from pre-tRNA to produce the mature 5'-terminus. It can also cleave other RNA substrates such as 4.5S RNA. The protein component plays an auxiliary but essential role in vivo by binding to the 5'-leader sequence and broadening the substrate specificity of the ribozyme. The protein is Ribonuclease P protein component of Lactococcus lactis subsp. lactis (strain IL1403) (Streptococcus lactis).